The sequence spans 394 residues: Small RNA 2'-O-methyltransferase (394 aa).

S-adenosyl-L-methionine is bound by residues aspartate 78 and serine 114. The Mg(2+) site is built by glutamate 132, glutamate 135, histidine 136, and histidine 181.

This sequence belongs to the methyltransferase superfamily. HEN1 family. The cofactor is Mg(2+).

Its subcellular location is the cytoplasm. It carries out the reaction small RNA 3'-end nucleotide + S-adenosyl-L-methionine = small RNA 3'-end 2'-O-methylnucleotide + S-adenosyl-L-homocysteine + H(+). In terms of biological role, methyltransferase that adds a 2'-O-methyl group at the 3'-end of piRNAs, a class of 24 to 30 nucleotide RNAs that are generated by a Dicer-independent mechanism and are primarily derived from transposons and other repeated sequence elements. This probably protects the 3'-end of piRNAs from uridylation activity and subsequent degradation. Stabilization of piRNAs is essential for gametogenesis. This is Small RNA 2'-O-methyltransferase (Henmt1) from Rattus norvegicus (Rat).